The following is a 121-amino-acid chain: Large ribosomal subunit protein bL19 (121 aa).

Belongs to the bacterial ribosomal protein bL19 family.

In terms of biological role, this protein is located at the 30S-50S ribosomal subunit interface and may play a role in the structure and function of the aminoacyl-tRNA binding site. The sequence is that of Large ribosomal subunit protein bL19 from Chloroherpeton thalassium (strain ATCC 35110 / GB-78).